Reading from the N-terminus, the 455-residue chain is Chromosomal replication initiator protein DnaA (455 aa).

Residues 1-82 (MNRNTSSLWA…NPDFVVKLVE (82 aa)) form a domain I, interacts with DnaA modulators region. A domain II region spans residues 82–117 (EGVKPAPKQNNIVTTKQNAETAVDSEQHLQSVEFKT). The domain III, AAA+ region stretch occupies residues 118–335 (GLNSNHLFEN…GALNRVIANA (218 aa)). ATP-binding residues include Gly-163, Gly-165, Lys-166, and Thr-167. The tract at residues 336–455 (EFTGKTITID…WSNLIRTLSA (120 aa)) is domain IV, binds dsDNA.

Belongs to the DnaA family. As to quaternary structure, oligomerizes as a right-handed, spiral filament on DNA at oriC.

The protein resides in the cytoplasm. Plays an essential role in the initiation and regulation of chromosomal replication. ATP-DnaA binds to the origin of replication (oriC) to initiate formation of the DNA replication initiation complex once per cell cycle. Binds the DnaA box (a 9 base pair repeat at the origin) and separates the double-stranded (ds)DNA. Forms a right-handed helical filament on oriC DNA; dsDNA binds to the exterior of the filament while single-stranded (ss)DNA is stabiized in the filament's interior. The ATP-DnaA-oriC complex binds and stabilizes one strand of the AT-rich DNA unwinding element (DUE), permitting loading of DNA polymerase. After initiation quickly degrades to an ADP-DnaA complex that is not apt for DNA replication. Binds acidic phospholipids. In Actinobacillus succinogenes (strain ATCC 55618 / DSM 22257 / CCUG 43843 / 130Z), this protein is Chromosomal replication initiator protein DnaA.